The primary structure comprises 251 residues: uncharacterized protein (251 aa).

This is an uncharacterized protein from Methanocaldococcus jannaschii (strain ATCC 43067 / DSM 2661 / JAL-1 / JCM 10045 / NBRC 100440) (Methanococcus jannaschii).